The chain runs to 256 residues: Acetyl-coenzyme A carboxylase carboxyl transferase subunit alpha (256 aa).

The region spanning Met-1–Glu-236 is the CoA carboxyltransferase C-terminal domain.

This sequence belongs to the AccA family. In terms of assembly, acetyl-CoA carboxylase is a heterohexamer composed of biotin carboxyl carrier protein (AccB), biotin carboxylase (AccC) and two subunits each of ACCase subunit alpha (AccA) and ACCase subunit beta (AccD).

It is found in the cytoplasm. It catalyses the reaction N(6)-carboxybiotinyl-L-lysyl-[protein] + acetyl-CoA = N(6)-biotinyl-L-lysyl-[protein] + malonyl-CoA. Its pathway is lipid metabolism; malonyl-CoA biosynthesis; malonyl-CoA from acetyl-CoA: step 1/1. In terms of biological role, component of the acetyl coenzyme A carboxylase (ACC) complex. First, biotin carboxylase catalyzes the carboxylation of biotin on its carrier protein (BCCP) and then the CO(2) group is transferred by the carboxyltransferase to acetyl-CoA to form malonyl-CoA. This is Acetyl-coenzyme A carboxylase carboxyl transferase subunit alpha from Streptococcus thermophilus (strain ATCC BAA-250 / LMG 18311).